A 306-amino-acid chain; its full sequence is MTDKIAVLLGGTSAEREVSLNSGAAVLAGLREGGIDAYPVDPKEVDVTQLKSMGFQKVFIALHGRGGEDGTLQGMLELMGLPYTGSGVMASALSMDKLRSKLLWQGAGLPVAPWVALTRVEFEKGLSDKQLAEISALGLPVIVKPSREGSSVGMSKVVAENALQDALRLAFQHDEEVLIEKWLSGPEFTVAILGEEILPSVRIQPSGTFYDYEAKYLSDETQYFCPAGLEASQEANLQALVLKAWTTLGCKGWGRIDVMLDSDGQFYLLEANTSPGMTSHSLVPMAARQAGMSFSQLVVRILELAD.

Catalysis depends on residues Glu15 and Ser150. In terms of domain architecture, ATP-grasp spans Lys101–Glu303. Ile134 to Thr189 is an ATP binding site. Mg(2+) contacts are provided by Asp257, Glu270, and Asn272. Ser281 is a catalytic residue.

It belongs to the D-alanine--D-alanine ligase family. As to quaternary structure, monomer. It depends on Mg(2+) as a cofactor. The cofactor is Mn(2+).

Its subcellular location is the cytoplasm. It catalyses the reaction 2 D-alanine + ATP = D-alanyl-D-alanine + ADP + phosphate + H(+). The protein operates within cell wall biogenesis; peptidoglycan biosynthesis. Its function is as follows. Cell wall formation. This chain is D-alanine--D-alanine ligase B (ddlB), found in Escherichia coli O157:H7.